The following is a 543-amino-acid chain: Bifunctional riboflavin biosynthesis protein RIBA 1, chloroplastic (543 aa).

A chloroplast-targeting transit peptide spans 1–56 (MSSINLSSSSPSTISLSRSRLSQSSTTLLHGLHRVTLPSNHPLSTFSIKTNTGKVK). The segment at 57–328 (AAVISREDDL…IADLIRYRRK (272 aa)) is DHBP synthase. D-ribulose 5-phosphate contacts are provided by residues 152-153 (RE), aspartate 157, 267-271 (RAGHT), and glutamate 291. Glutamate 153 provides a ligand contact to Mg(2+). Mg(2+) is bound at residue histidine 270. Positions 329–543 (RDKLVERASA…VEKIESESES (215 aa)) are GTP cyclohydrolase II. GTP is bound at residue 379–383 (RVHSE). The Zn(2+) site is built by cysteine 384, cysteine 395, and cysteine 397. Residues glutamine 400, 423–425 (EGR), and threonine 445 each bind GTP. The active-site Proton acceptor; for GTP cyclohydrolase activity is aspartate 457. Arginine 459 acts as the Nucleophile; for GTP cyclohydrolase activity in catalysis. The GTP site is built by threonine 480 and lysine 485.

In the N-terminal section; belongs to the DHBP synthase family. The protein in the C-terminal section; belongs to the GTP cyclohydrolase II family. The cofactor is Mg(2+). Mn(2+) is required as a cofactor. Zn(2+) serves as cofactor. As to expression, expressed in leaves, shoots, roots, flowers and siliques.

Its subcellular location is the plastid. The protein localises to the chloroplast. The enzyme catalyses D-ribulose 5-phosphate = (2S)-2-hydroxy-3-oxobutyl phosphate + formate + H(+). It catalyses the reaction GTP + 4 H2O = 2,5-diamino-6-hydroxy-4-(5-phosphoribosylamino)-pyrimidine + formate + 2 phosphate + 3 H(+). It participates in cofactor biosynthesis; riboflavin biosynthesis; 2-hydroxy-3-oxobutyl phosphate from D-ribulose 5-phosphate: step 1/1. The protein operates within cofactor biosynthesis; riboflavin biosynthesis; 5-amino-6-(D-ribitylamino)uracil from GTP: step 1/4. Functionally, involved in riboflavin biosynthesis. Catalyzes both the conversion of D-ribulose 5-phosphate to formate and 3,4-dihydroxy-2-butanone 4-phosphate and the conversion of GTP to 2,5-diamino-6-ribosylamino-4(3H)-pyrimidinone 5'-phosphate (DARP), formate and pyrophosphate. RIBA2 and RIBA3 together are not able to complement the loss of function of RIBA1. This is Bifunctional riboflavin biosynthesis protein RIBA 1, chloroplastic (RIBA1) from Arabidopsis thaliana (Mouse-ear cress).